The primary structure comprises 611 residues: tRNA uridine 5-carboxymethylaminomethyl modification enzyme MnmG (611 aa).

An FAD-binding site is contributed by 14-19; the sequence is GAGHAG. 274–288 contacts NAD(+); it reads GPRYCPSIEDKIVKF.

Belongs to the MnmG family. Homodimer. Heterotetramer of two MnmE and two MnmG subunits. Requires FAD as cofactor.

It localises to the cytoplasm. In terms of biological role, NAD-binding protein involved in the addition of a carboxymethylaminomethyl (cmnm) group at the wobble position (U34) of certain tRNAs, forming tRNA-cmnm(5)s(2)U34. The protein is tRNA uridine 5-carboxymethylaminomethyl modification enzyme MnmG of Chlamydia abortus (strain DSM 27085 / S26/3) (Chlamydophila abortus).